The sequence spans 81 residues: Photosystem I iron-sulfur center (81 aa).

2 4Fe-4S ferredoxin-type domains span residues 2 to 31 (SHAV…MVPW) and 39 to 68 (IASS…IRVY). 8 residues coordinate [4Fe-4S] cluster: C11, C14, C17, C21, C48, C51, C54, and C58.

The cyanobacterial PSI reaction center is composed of one copy each of PsaA,B,C,D,E,F,I,J,K,L,M and X, and forms trimeric complexes. [4Fe-4S] cluster is required as a cofactor.

The protein localises to the cellular thylakoid membrane. The enzyme catalyses reduced [plastocyanin] + hnu + oxidized [2Fe-2S]-[ferredoxin] = oxidized [plastocyanin] + reduced [2Fe-2S]-[ferredoxin]. In terms of biological role, apoprotein for the two 4Fe-4S centers FA and FB of photosystem I (PSI); essential for photochemical activity. FB is the terminal electron acceptor of PSI, donating electrons to ferredoxin. The C-terminus interacts with PsaA/B/D and helps assemble the protein into the PSI complex. Required for binding of PsaD and PsaE to PSI. PSI is a plastocyanin/cytochrome c6-ferredoxin oxidoreductase, converting photonic excitation into a charge separation, which transfers an electron from the donor P700 chlorophyll pair to the spectroscopically characterized acceptors A0, A1, FX, FA and FB in turn. In Prochlorococcus marinus (strain MIT 9211), this protein is Photosystem I iron-sulfur center.